Here is a 450-residue protein sequence, read N- to C-terminus: Putative receptor-like protein kinase At1g72540 (450 aa).

Threonine 73 bears the Phosphothreonine mark. One can recognise a Protein kinase domain in the interval 84 to 365 (FSKYNFLGEG…TVVKTLEPIL (282 aa)). ATP-binding positions include 90–98 (LGEGGFGEV) and lysine 119. Position 164 is a phosphotyrosine (tyrosine 164). Residue aspartate 214 is the Proton acceptor of the active site. Serine 218 bears the Phosphoserine mark. Position 254 is a phosphothreonine (threonine 254). The residue at position 262 (tyrosine 262) is a Phosphotyrosine.

It belongs to the protein kinase superfamily. Ser/Thr protein kinase family.

It catalyses the reaction L-seryl-[protein] + ATP = O-phospho-L-seryl-[protein] + ADP + H(+). It carries out the reaction L-threonyl-[protein] + ATP = O-phospho-L-threonyl-[protein] + ADP + H(+). This Arabidopsis thaliana (Mouse-ear cress) protein is Putative receptor-like protein kinase At1g72540.